An 80-amino-acid polypeptide reads, in one-letter code: Peroxidase (80 aa).

Residues 56–80 form a disordered region; it reads DANEAEANSDLPGFNSSRSELEAAF. Substrate is bound at residue Pro-67. Asn-70 carries N-linked (GlcNAc...) asparagine glycosylation.

Belongs to the peroxidase family. Classical plant (class III) peroxidase subfamily. Ca(2+) serves as cofactor. Heme b is required as a cofactor.

It catalyses the reaction 2 a phenolic donor + H2O2 = 2 a phenolic radical donor + 2 H2O. Its function is as follows. Removal of H(2)O(2), oxidation of toxic reductants, biosynthesis and degradation of lignin, suberization, auxin catabolism, response to environmental stresses such as wounding, pathogen attack and oxidative stress. These functions might be dependent on each isozyme/isoform in each plant tissue. The polypeptide is Peroxidase (Triticum aestivum (Wheat)).